The chain runs to 255 residues: tRNA uridine(34) hydroxylase (255 aa).

A Rhodanese domain is found at 125–219 (AAPDTLLIDT…YLEGIPESES (95 aa)). The active-site Cysteine persulfide intermediate is Cys179.

It belongs to the TrhO family.

It carries out the reaction uridine(34) in tRNA + AH2 + O2 = 5-hydroxyuridine(34) in tRNA + A + H2O. Its function is as follows. Catalyzes oxygen-dependent 5-hydroxyuridine (ho5U) modification at position 34 in tRNAs. This chain is tRNA uridine(34) hydroxylase, found in Nitrobacter hamburgensis (strain DSM 10229 / NCIMB 13809 / X14).